Consider the following 304-residue polypeptide: Energy-coupling factor transporter ATP-binding protein EcfA2 (304 aa).

The ABC transporter domain maps to 11 to 260 (LKADEILAVS…QTFLEKTTIV (250 aa)). 54 to 61 (GDSGSGKS) provides a ligand contact to ATP.

Belongs to the ABC transporter superfamily. Energy-coupling factor EcfA family. Forms a stable energy-coupling factor (ECF) transporter complex composed of 2 membrane-embedded substrate-binding proteins (S component), 2 ATP-binding proteins (A component) and 2 transmembrane proteins (T component).

It is found in the cell membrane. ATP-binding (A) component of a common energy-coupling factor (ECF) ABC-transporter complex. Unlike classic ABC transporters this ECF transporter provides the energy necessary to transport a number of different substrates. The chain is Energy-coupling factor transporter ATP-binding protein EcfA2 from Mycoplasma genitalium (strain ATCC 33530 / DSM 19775 / NCTC 10195 / G37) (Mycoplasmoides genitalium).